Reading from the N-terminus, the 152-residue chain is Small ribosomal subunit protein uS8m (152 aa).

This sequence belongs to the universal ribosomal protein uS8 family.

It localises to the mitochondrion. In Dictyostelium discoideum (Social amoeba), this protein is Small ribosomal subunit protein uS8m (mrps8).